Consider the following 379-residue polypeptide: Guanine nucleotide-binding protein G(s) subunit alpha (379 aa).

Residues 1–29 are disordered; it reads MGCFGSAGAKGDAEENKKRKEANKNINKQ. G2 carries the N-palmitoyl glycine lipid modification. A lipid anchor (S-palmitoyl cysteine) is attached at C3. A G-alpha domain is found at 39 to 379; it reads ATHRLLLLGA…RMHLRQYELL (341 aa). A G1 motif region spans residues 42–55; the sequence is RLLLLGAGESGKST. GTP-binding positions include 47–54, 183–189, 208–212, 277–280, and A351; these read GAGESGKS, LRCRVLT, DVGGQ, and NKQD. The Mg(2+) site is built by S54 and T189. The tract at residues 181 to 189 is G2 motif; the sequence is DILRCRVLT. A G3 motif region spans residues 204-213; sequence FHMFDVGGQR. Positions 273–280 are G4 motif; the sequence is ILFLNKQD. Residues 349 to 354 form a G5 motif region; it reads TCAVDT.

The protein belongs to the G-alpha family. G(s) subfamily. In terms of assembly, g proteins are composed of 3 units; alpha, beta and gamma. The alpha chain contains the guanine nucleotide binding site.

Guanine nucleotide-binding proteins (G proteins) are involved as modulators or transducers in various transmembrane signaling systems. The G(s) protein is involved in hormonal regulation of adenylate cyclase: it activates the cyclase in response to beta-adrenergic stimuli. This is Guanine nucleotide-binding protein G(s) subunit alpha from Homarus americanus (American lobster).